A 1208-amino-acid chain; its full sequence is ATP-dependent DNA helicase Q4 (1208 aa).

Disordered regions lie at residues 17–180 (AFRR…ASLS) and 201–333 (FLGA…AGKA). Position 27 is a phosphoserine (serine 27). Over residues 36–47 (EETRALYREYRT) the composition is skewed to basic and acidic residues. Low complexity predominate over residues 61 to 70 (SSESLPAAAE). A compositionally biased stretch (polar residues) spans 86-100 (ATKSPQSTPGRSRQG). Phosphoserine occurs at positions 178 and 180. A compositionally biased stretch (polar residues) spans 273-283 (AQVQQESSQAG). The Helicase ATP-binding domain occupies 489-662 (VMRILSGIST…AQHLAVAEEP (174 aa)). 502–509 (LPTGAGKS) contributes to the ATP binding site. Residues 605–608 (DEAH) carry the DEAH box motif. The region spanning 683 to 850 (DTDQALLTLL…AVKRLVQRVF (168 aa)) is the Helicase C-terminal domain. 2 residues coordinate Zn(2+): cysteine 853 and cysteine 855. Positions 860–888 (PPSEQEGAVGGERPVPKYPPQEAEQLSHQ) are disordered. 2 residues coordinate Zn(2+): cysteine 897 and histidine 900. Positions 1111-1130 (EEGQEPGGMEDAQGPEPGQA) are disordered. Residues 1117 to 1208 (GGMEDAQGPE…ATEELLQVAR (92 aa)) form an increases helicase activity about 5-fold (in a fragment starting at residue 427) region.

The protein belongs to the helicase family. RecQ subfamily. As to quaternary structure, interacts with UBR1 and UBR2. Interacts with MCM10; this interaction regulates RECQL4 unwinding activity. Interacts (via residues 1-54) with TOPBP1. Zn(2+) serves as cofactor. As to expression, ubiquitously expressed, with highest levels in thymus and testis.

It is found in the cytoplasm. The protein resides in the nucleus. The catalysed reaction is Couples ATP hydrolysis with the unwinding of duplex DNA by translocating in the 3'-5' direction.. It catalyses the reaction ATP + H2O = ADP + phosphate + H(+). Functionally, an ATP-dependent DNA helicase which unwinds dsDNA with a 3'-overhang in a 3'-5' direction. Does not unwind more than 18 bp of dsDNA. May modulate chromosome segregation. The N-terminal domain (residues 1-54) binds DNA Y-shaped DNA better than ss- or dsDNA. The core helicase domain binds ssDNA. The chain is ATP-dependent DNA helicase Q4 (RECQL4) from Homo sapiens (Human).